The sequence spans 498 residues: Glycerol kinase (498 aa).

T12 serves as a coordination point for ADP. T12, T13, and S14 together coordinate ATP. T12 serves as a coordination point for sn-glycerol 3-phosphate. Position 16 (R16) interacts with ADP. Sn-glycerol 3-phosphate contacts are provided by R82, E83, Y134, and D244. Positions 82, 83, 134, 244, and 245 each coordinate glycerol. T266 and G310 together coordinate ADP. Residues T266, G310, Q314, and G411 each contribute to the ATP site. ADP contacts are provided by G411 and N415.

This sequence belongs to the FGGY kinase family.

It catalyses the reaction glycerol + ATP = sn-glycerol 3-phosphate + ADP + H(+). It participates in polyol metabolism; glycerol degradation via glycerol kinase pathway; sn-glycerol 3-phosphate from glycerol: step 1/1. Its activity is regulated as follows. Inhibited by fructose 1,6-bisphosphate (FBP). In terms of biological role, key enzyme in the regulation of glycerol uptake and metabolism. Catalyzes the phosphorylation of glycerol to yield sn-glycerol 3-phosphate. This chain is Glycerol kinase, found in Roseiflexus sp. (strain RS-1).